We begin with the raw amino-acid sequence, 893 residues long: Protein FAM186B (893 aa).

Disordered stretches follow at residues Gly177–Thr207, Gln327–Met376, Leu537–Arg557, Leu574–Met611, and Lys806–Tyr827. 2 stretches are compositionally biased toward polar residues: residues Gln179–Ser188 and Gln197–Thr207. Positions Arg303–Leu331 form a coiled coil. Residues Ser342 to Val353 show a composition bias toward basic and acidic residues.

This sequence belongs to the FAM186 family.

The chain is Protein FAM186B (FAM186B) from Homo sapiens (Human).